The sequence spans 79 residues: Exodeoxyribonuclease 7 small subunit (79 aa).

This sequence belongs to the XseB family. As to quaternary structure, heterooligomer composed of large and small subunits.

The protein localises to the cytoplasm. It catalyses the reaction Exonucleolytic cleavage in either 5'- to 3'- or 3'- to 5'-direction to yield nucleoside 5'-phosphates.. Its function is as follows. Bidirectionally degrades single-stranded DNA into large acid-insoluble oligonucleotides, which are then degraded further into small acid-soluble oligonucleotides. This is Exodeoxyribonuclease 7 small subunit from Haemophilus influenzae (strain PittGG).